The chain runs to 463 residues: Ribosomal protein uS12 methylthiotransferase RimO (463 aa).

The region spanning 15–130 is the MTTase N-terminal domain; that stretch reads PKVGMVSLGC…VMQAVHSHLP (116 aa). Residues Cys-24, Cys-60, Cys-89, Cys-161, Cys-165, and Cys-168 each contribute to the [4Fe-4S] cluster site. The Radical SAM core domain occupies 147 to 392; that stretch reads LTPRHYAYLK…MEVAEEVSAA (246 aa). One can recognise a TRAM domain in the interval 395 to 463; sequence ARKIGKTLKV…ADGHDLWGEV (69 aa).

It belongs to the methylthiotransferase family. RimO subfamily. The cofactor is [4Fe-4S] cluster.

It is found in the cytoplasm. It carries out the reaction L-aspartate(89)-[ribosomal protein uS12]-hydrogen + (sulfur carrier)-SH + AH2 + 2 S-adenosyl-L-methionine = 3-methylsulfanyl-L-aspartate(89)-[ribosomal protein uS12]-hydrogen + (sulfur carrier)-H + 5'-deoxyadenosine + L-methionine + A + S-adenosyl-L-homocysteine + 2 H(+). In terms of biological role, catalyzes the methylthiolation of an aspartic acid residue of ribosomal protein uS12. In Burkholderia mallei (strain NCTC 10229), this protein is Ribosomal protein uS12 methylthiotransferase RimO.